Here is a 311-residue protein sequence, read N- to C-terminus: Methionyl-tRNA formyltransferase (311 aa).

Residue 110–113 participates in (6S)-5,6,7,8-tetrahydrofolate binding; that stretch reads SLLP.

This sequence belongs to the Fmt family.

It catalyses the reaction L-methionyl-tRNA(fMet) + (6R)-10-formyltetrahydrofolate = N-formyl-L-methionyl-tRNA(fMet) + (6S)-5,6,7,8-tetrahydrofolate + H(+). Attaches a formyl group to the free amino group of methionyl-tRNA(fMet). The formyl group appears to play a dual role in the initiator identity of N-formylmethionyl-tRNA by promoting its recognition by IF2 and preventing the misappropriation of this tRNA by the elongation apparatus. The sequence is that of Methionyl-tRNA formyltransferase from Streptococcus pyogenes serotype M1.